The primary structure comprises 197 residues: Nucleoside triphosphate pyrophosphatase (197 aa).

The active-site Proton acceptor is D71.

This sequence belongs to the Maf family. Requires a divalent metal cation as cofactor.

The protein resides in the cytoplasm. The enzyme catalyses a ribonucleoside 5'-triphosphate + H2O = a ribonucleoside 5'-phosphate + diphosphate + H(+). The catalysed reaction is a 2'-deoxyribonucleoside 5'-triphosphate + H2O = a 2'-deoxyribonucleoside 5'-phosphate + diphosphate + H(+). Nucleoside triphosphate pyrophosphatase. May have a dual role in cell division arrest and in preventing the incorporation of modified nucleotides into cellular nucleic acids. The sequence is that of Nucleoside triphosphate pyrophosphatase from Trichormus variabilis (strain ATCC 29413 / PCC 7937) (Anabaena variabilis).